Consider the following 280-residue polypeptide: Hemin import ATP-binding protein HmuV (280 aa).

The region spanning 26-260 is the ABC transporter domain; sequence LAAAGGLRVH…GLLSEVYDQP (235 aa). ATP is bound at residue 59–66; that stretch reads GPNGAGKS.

It belongs to the ABC transporter superfamily. Heme (hemin) importer (TC 3.A.1.14.5) family. The complex is composed of two ATP-binding proteins (HmuV), two transmembrane proteins (HmuU) and a solute-binding protein (HmuT).

The protein localises to the cell membrane. Its function is as follows. Part of the ABC transporter complex HmuTUV involved in hemin import. Responsible for energy coupling to the transport system. The protein is Hemin import ATP-binding protein HmuV of Streptomyces coelicolor (strain ATCC BAA-471 / A3(2) / M145).